We begin with the raw amino-acid sequence, 271 residues long: S-adenosylmethionine decarboxylase proenzyme (271 aa).

Ser121 serves as the catalytic Schiff-base intermediate with substrate; via pyruvic acid. At Ser121 the chain carries Pyruvic acid (Ser); by autocatalysis. His126 acts as the Proton acceptor; for processing activity in catalysis. Catalysis depends on Cys149, which acts as the Proton donor; for catalytic activity.

It belongs to the prokaryotic AdoMetDC family. Type 2 subfamily. As to quaternary structure, heterooctamer of four alpha and four beta chains arranged as a tetramer of alpha/beta heterodimers. It depends on pyruvate as a cofactor. In terms of processing, is synthesized initially as an inactive proenzyme. Formation of the active enzyme involves a self-maturation process in which the active site pyruvoyl group is generated from an internal serine residue via an autocatalytic post-translational modification. Two non-identical subunits are generated from the proenzyme in this reaction, and the pyruvate is formed at the N-terminus of the alpha chain, which is derived from the carboxyl end of the proenzyme. The post-translation cleavage follows an unusual pathway, termed non-hydrolytic serinolysis, in which the side chain hydroxyl group of the serine supplies its oxygen atom to form the C-terminus of the beta chain, while the remainder of the serine residue undergoes an oxidative deamination to produce ammonia and the pyruvoyl group blocking the N-terminus of the alpha chain.

The enzyme catalyses S-adenosyl-L-methionine + H(+) = S-adenosyl 3-(methylsulfanyl)propylamine + CO2. It functions in the pathway amine and polyamine biosynthesis; S-adenosylmethioninamine biosynthesis; S-adenosylmethioninamine from S-adenosyl-L-methionine: step 1/1. Functionally, catalyzes the decarboxylation of S-adenosylmethionine to S-adenosylmethioninamine (dcAdoMet), the propylamine donor required for the synthesis of the polyamines spermine and spermidine from the diamine putrescine. In Clostridium perfringens (strain ATCC 13124 / DSM 756 / JCM 1290 / NCIMB 6125 / NCTC 8237 / Type A), this protein is S-adenosylmethionine decarboxylase proenzyme.